We begin with the raw amino-acid sequence, 223 residues long: MKSAVVQLPGLNRDRDMIAALTKISGHQPVTIWQTETEIPDVDLIVIPGGFSYGDYLRCGAIAARMPVMQAIIDKAAKGVKVLGVCNGFQILVEAGLLPGALMRNASLKFVCREIKLKVVNAETDFTRAYAQGQVIRCPVAHHDGNYFADEATLAKIEGNGQVLFRYAEGTNPNGSINDIAGVMNEKGNVLGMMPHPENLIEAAHGGSDGRGLFASALDVVAA.

One can recognise a Glutamine amidotransferase type-1 domain in the interval Ser3–Ala223. The Nucleophile role is filled by Cys86. Active-site residues include His196 and Glu198.

In terms of assembly, part of the FGAM synthase complex composed of 1 PurL, 1 PurQ and 2 PurS subunits.

It localises to the cytoplasm. It catalyses the reaction N(2)-formyl-N(1)-(5-phospho-beta-D-ribosyl)glycinamide + L-glutamine + ATP + H2O = 2-formamido-N(1)-(5-O-phospho-beta-D-ribosyl)acetamidine + L-glutamate + ADP + phosphate + H(+). It carries out the reaction L-glutamine + H2O = L-glutamate + NH4(+). It functions in the pathway purine metabolism; IMP biosynthesis via de novo pathway; 5-amino-1-(5-phospho-D-ribosyl)imidazole from N(2)-formyl-N(1)-(5-phospho-D-ribosyl)glycinamide: step 1/2. Part of the phosphoribosylformylglycinamidine synthase complex involved in the purines biosynthetic pathway. Catalyzes the ATP-dependent conversion of formylglycinamide ribonucleotide (FGAR) and glutamine to yield formylglycinamidine ribonucleotide (FGAM) and glutamate. The FGAM synthase complex is composed of three subunits. PurQ produces an ammonia molecule by converting glutamine to glutamate. PurL transfers the ammonia molecule to FGAR to form FGAM in an ATP-dependent manner. PurS interacts with PurQ and PurL and is thought to assist in the transfer of the ammonia molecule from PurQ to PurL. The sequence is that of Phosphoribosylformylglycinamidine synthase subunit PurQ from Rhizobium etli (strain ATCC 51251 / DSM 11541 / JCM 21823 / NBRC 15573 / CFN 42).